The chain runs to 252 residues: GTP cyclohydrolase 1 type 2 homolog (252 aa).

Residues His63, His64, Asp101, His220, and Glu224 each coordinate a divalent metal cation.

This sequence belongs to the GTP cyclohydrolase I type 2/NIF3 family. As to quaternary structure, homohexamer.

This is GTP cyclohydrolase 1 type 2 homolog from Vibrio cholerae serotype O1 (strain ATCC 39315 / El Tor Inaba N16961).